A 136-amino-acid polypeptide reads, in one-letter code: Glutaredoxin-C8 (136 aa).

The 103-residue stretch at 33-135 (SSFVKSTVKA…KLLNIDVKED (103 aa)) folds into the Glutaredoxin domain. A disulfide bridge links Cys-53 with Cys-56.

It belongs to the glutaredoxin family. CPYC subfamily.

The protein resides in the cytoplasm. In terms of biological role, has a glutathione-disulfide oxidoreductase activity in the presence of NADPH and glutathione reductase. Reduces low molecular weight disulfides and proteins. The protein is Glutaredoxin-C8 (GRXC8) of Oryza sativa subsp. japonica (Rice).